Consider the following 359-residue polypeptide: SAGA complex subunit Spt7 (359 aa).

As to quaternary structure, component of the Spt-Ada-Gcn5 acetyltransferase (SAGA) complex consisting of wda/Taf5L, Saf6, Taf9, Taf10b, Taf12, Ada1, Spt3, Spt7, Spt20, Sf3b3, Sf3b5, Nipped-A/Tra1, a histone acetyltransferase (HAT) module made up of Gcn5, Ada2b (Isoform B), Ada3 and Sgf29, and a deubiquitinase (DUB) module made up of not/nonstop, Sgf11 and e(y)2 tethered to SAGA by Atxn7. Interacts with Ada2b; the interaction is direct.

The protein localises to the nucleus. In terms of biological role, component of the transcription regulatory complex SAGA, a multiprotein complex that activates transcription by remodeling chromatin and mediating histone acetylation and deubiquitination. The SAGA complex predominantly acetylates histone H3. The sequence is that of SAGA complex subunit Spt7 from Drosophila melanogaster (Fruit fly).